The chain runs to 452 residues: Retrograde protein of 51 kDa (452 aa).

Positions 1–13 are enriched in basic and acidic residues; sequence MQKGAKIEDEGRQ. The tract at residues 1-50 is disordered; that stretch reads MQKGAKIEDEGRQSRIQSRNFIIQRSDPRTRGSSVYSSRSSSYNVRSSIS. Residues 1-75 are head; the sequence is MQKGAKIEDE…KGNREKEKRE (75 aa). Residues 14 to 23 are compositionally biased toward polar residues; that stretch reads SRIQSRNFII. The segment covering 33 to 50 has biased composition (low complexity); that stretch reads SSVYSSRSSSYNVRSSIS. In terms of domain architecture, IF rod spans 72–424; it reads EKREMQNLNE…KLLEGEESRV (353 aa). The segment at 76–111 is coil 1A; sequence MQNLNERLASYIEKVHFLDAQVKKLEAENEALRNRK. A linker 1 region spans residues 112 to 121; that stretch reads VEDLQPIRDA. The interval 122–259 is coil 1B; it reads YENELRQARK…DLLDQLELLK (138 aa). Serine 156 carries the post-translational modification Sulfoserine. The linker 12 stretch occupies residues 260-278; it reads PEPIQIKGMDYADFWKSEL. The coil 2 stretch occupies residues 279-424; the sequence is AKCVREINLA…KLLEGEESRV (146 aa). The tail stretch occupies residues 425 to 452; the sequence is GLRTLVEQAIGTQSKGSASLKDAIQSSS.

The protein belongs to the intermediate filament family.

In Lymnaea stagnalis (Great pond snail), this protein is Retrograde protein of 51 kDa (RGP51).